Here is a 63-residue protein sequence, read N- to C-terminus: Sec-independent protein translocase protein TatA (63 aa).

The chain crosses the membrane as a helical span at residues 1–21 (MGGLSVGSVVLIALVALLIFG).

It belongs to the TatA/E family. Forms a complex with TatC.

Its subcellular location is the cell membrane. Part of the twin-arginine translocation (Tat) system that transports large folded proteins containing a characteristic twin-arginine motif in their signal peptide across membranes. TatA could form the protein-conducting channel of the Tat system. The chain is Sec-independent protein translocase protein TatA from Shouchella clausii (strain KSM-K16) (Alkalihalobacillus clausii).